Consider the following 417-residue polypeptide: Serine hydroxymethyltransferase (417 aa).

Residues L121 and G125–L127 each bind (6S)-5,6,7,8-tetrahydrofolate. Residue K230 is modified to N6-(pyridoxal phosphate)lysine. E245 provides a ligand contact to (6S)-5,6,7,8-tetrahydrofolate.

This sequence belongs to the SHMT family. As to quaternary structure, homodimer. It depends on pyridoxal 5'-phosphate as a cofactor.

It is found in the cytoplasm. The enzyme catalyses (6R)-5,10-methylene-5,6,7,8-tetrahydrofolate + glycine + H2O = (6S)-5,6,7,8-tetrahydrofolate + L-serine. It functions in the pathway one-carbon metabolism; tetrahydrofolate interconversion. It participates in amino-acid biosynthesis; glycine biosynthesis; glycine from L-serine: step 1/1. Functionally, catalyzes the reversible interconversion of serine and glycine with tetrahydrofolate (THF) serving as the one-carbon carrier. This reaction serves as the major source of one-carbon groups required for the biosynthesis of purines, thymidylate, methionine, and other important biomolecules. Also exhibits THF-independent aldolase activity toward beta-hydroxyamino acids, producing glycine and aldehydes, via a retro-aldol mechanism. The protein is Serine hydroxymethyltransferase of Desulfitobacterium hafniense (strain DSM 10664 / DCB-2).